A 70-amino-acid chain; its full sequence is Gas vesicle protein A (70 aa).

The protein belongs to the gas vesicle GvpA family. The gas vesicle shell is 2 nm thick and consists of a single layer of this protein. It forms helical ribs nearly perpendicular to the long axis of the vesicle.

Its subcellular location is the gas vesicle shell. Its function is as follows. Gas vesicles are hollow, gas filled proteinaceous nanostructures found in some microorganisms. During planktonic growth they allow positioning of the organism at a favorable depth for light or nutrient acquisition. GvpA forms the protein shell. This chain is Gas vesicle protein A, found in Bradyrhizobium sp. (strain ORS 278).